The chain runs to 160 residues: NADH-quinone oxidoreductase subunit B (160 aa).

Cys-37, Cys-38, Cys-102, and Cys-132 together coordinate [4Fe-4S] cluster.

Belongs to the complex I 20 kDa subunit family. In terms of assembly, NDH-1 is composed of 14 different subunits. Subunits NuoB, C, D, E, F, and G constitute the peripheral sector of the complex. It depends on [4Fe-4S] cluster as a cofactor.

Its subcellular location is the cell inner membrane. It carries out the reaction a quinone + NADH + 5 H(+)(in) = a quinol + NAD(+) + 4 H(+)(out). Functionally, NDH-1 shuttles electrons from NADH, via FMN and iron-sulfur (Fe-S) centers, to quinones in the respiratory chain. Couples the redox reaction to proton translocation (for every two electrons transferred, four hydrogen ions are translocated across the cytoplasmic membrane), and thus conserves the redox energy in a proton gradient. The polypeptide is NADH-quinone oxidoreductase subunit B (Cupriavidus metallidurans (strain ATCC 43123 / DSM 2839 / NBRC 102507 / CH34) (Ralstonia metallidurans)).